The following is a 208-amino-acid chain: Mediator of RNA polymerase II transcription subunit 18 (208 aa).

At S66 the chain carries Phosphoserine.

The protein belongs to the Mediator complex subunit 18 family. As to quaternary structure, component of the Mediator complex, which is composed of MED1, MED4, MED6, MED7, MED8, MED9, MED10, MED11, MED12, MED13, MED13L, MED14, MED15, MED16, MED17, MED18, MED19, MED20, MED21, MED22, MED23, MED24, MED25, MED26, MED27, MED29, MED30, MED31, CCNC, CDK8 and CDC2L6/CDK11. The MED12, MED13, CCNC and CDK8 subunits form a distinct module termed the CDK8 module. Mediator containing the CDK8 module is less active than Mediator lacking this module in supporting transcriptional activation. Individual preparations of the Mediator complex lacking one or more distinct subunits have been variously termed ARC, CRSP, DRIP, PC2, SMCC and TRAP.

The protein resides in the nucleus. Component of the Mediator complex, a coactivator involved in the regulated transcription of nearly all RNA polymerase II-dependent genes. Mediator functions as a bridge to convey information from gene-specific regulatory proteins to the basal RNA polymerase II transcription machinery. Mediator is recruited to promoters by direct interactions with regulatory proteins and serves as a scaffold for the assembly of a functional preinitiation complex with RNA polymerase II and the general transcription factors. This Bos taurus (Bovine) protein is Mediator of RNA polymerase II transcription subunit 18 (MED18).